Consider the following 960-residue polypeptide: Protein mono-ADP-ribosyltransferase PARP10 (960 aa).

An ADP-ribosyl glutamic acid modification is found at Glu103. Over residues 325–341 (SMGSTSPVDPVESSTEL) the composition is skewed to polar residues. Residues 325 to 346 (SMGSTSPVDPVESSTELPEQVG) are disordered. A phosphoserine mark is found at Ser381 and Ser388. The tract at residues 553 to 576 (SPHGGEDRVPLEMEKEKPGGPGET) is disordered. The span at 555-570 (HGGEDRVPLEMEKEKP) shows a compositional bias: basic and acidic residues. The short motif at 604–621 (LEEEATLQLAIHRSLESQ) is the Ubiquitin-interacting element. Ser617 is subject to Phosphoserine. Residues 649-856 (DEDTGGEAQL…CAHGFNRSFC (208 aa)) form a myc binding region. In terms of domain architecture, PARP catalytic spans 755-960 (PNLSEQGLKE…TCKNILPGTP (206 aa)). A PIP-box motif is present at residues 780-787 (QDVVRAFY). Glu831 bears the ADP-ribosyl glutamic acid mark.

This sequence belongs to the ARTD/PARP family. In terms of assembly, interacts with MYC. Interacts with PARP14. Interacts (via-PIP box and ubiquitin-interacting motifs) with PCNA. In terms of processing, stimulated through its phosphorylation by CDK2. Acquires CDK-dependent phosphorylation through late-G1 to S phase, and from prometaphase to cytokinesis in the nucleolar organizing regions. Phosphorylation is suppressed in growth-arrested cells. Auto-mono-ADP-ribosylated on glutamate and lysine residues.

It localises to the cytoplasm. Its subcellular location is the nucleus. It catalyses the reaction L-lysyl-[protein] + NAD(+) = N(6)-(ADP-D-ribosyl)-L-lysyl-[protein] + nicotinamide + H(+). It carries out the reaction L-aspartyl-[protein] + NAD(+) = 4-O-(ADP-D-ribosyl)-L-aspartyl-[protein] + nicotinamide. The catalysed reaction is L-glutamyl-[protein] + NAD(+) = 5-O-(ADP-D-ribosyl)-L-glutamyl-[protein] + nicotinamide. In terms of biological role, ADP-ribosyltransferase that mediates mono-ADP-ribosylation of glutamate and aspartate residues on target proteins. In contrast to PARP1 and PARP2, it is not able to mediate poly-ADP-ribosylation. Catalyzes mono-ADP-ribosylation of GSK3B, leading to negatively regulate GSK3B kinase activity. Involved in translesion DNA synthesis in response to DNA damage via its interaction with PCNA. The polypeptide is Protein mono-ADP-ribosyltransferase PARP10 (Mus musculus (Mouse)).